The sequence spans 734 residues: Ribosomal RNA large subunit methyltransferase K/L (734 aa).

Residues 43-154 (VGYRSCLWSR…RNQLTLSLDL (112 aa)) form the THUMP domain.

This sequence belongs to the methyltransferase superfamily. RlmKL family.

The protein localises to the cytoplasm. The catalysed reaction is guanosine(2445) in 23S rRNA + S-adenosyl-L-methionine = N(2)-methylguanosine(2445) in 23S rRNA + S-adenosyl-L-homocysteine + H(+). It catalyses the reaction guanosine(2069) in 23S rRNA + S-adenosyl-L-methionine = N(2)-methylguanosine(2069) in 23S rRNA + S-adenosyl-L-homocysteine + H(+). Specifically methylates the guanine in position 2445 (m2G2445) and the guanine in position 2069 (m7G2069) of 23S rRNA. The chain is Ribosomal RNA large subunit methyltransferase K/L from Hydrogenovibrio crunogenus (strain DSM 25203 / XCL-2) (Thiomicrospira crunogena).